Here is a 291-residue protein sequence, read N- to C-terminus: uncharacterized protein (291 aa).

Belongs to the pseudouridine synthase RluA family.

The catalysed reaction is a uridine in RNA = a pseudouridine in RNA. This is an uncharacterized protein from Synechocystis sp. (strain ATCC 27184 / PCC 6803 / Kazusa).